The primary structure comprises 517 residues: Gallate 1-beta-glucosyltransferase 84A24 (517 aa).

The active-site Proton acceptor is His19. Position 19 (His19) interacts with an anthocyanidin. Positions 344, 359, 362, 363, 364, and 367 each coordinate UDP-alpha-D-glucose. Position 382 (Gly382) interacts with an anthocyanidin. Asp383 and Gln384 together coordinate UDP-alpha-D-glucose.

It belongs to the UDP-glycosyltransferase family. In terms of tissue distribution, highly expressed in leaf. Also expressed in peel, stem, root and aril.

The protein resides in the cytoplasm. It carries out the reaction 3,4,5-trihydroxybenzoate + UDP-alpha-D-glucose = 1-O-galloyl-beta-D-glucose + UDP. It catalyses the reaction 3,4-dihydroxybenzoate + UDP-alpha-D-glucose = 1-O-(3,4-dihydroxy-benzoyl)-beta-D-glucose + UDP. The enzyme catalyses 4-hydroxybenzoate + UDP-alpha-D-glucose = 4-(beta-D-glucosyloxy)benzoate + UDP + H(+). The catalysed reaction is (E)-cinnamate + UDP-alpha-D-glucose = 1-O-(trans-cinnamoyl)-beta-D-glucose + UDP. It carries out the reaction (E)-sinapate + UDP-alpha-D-glucose = 1-O-(trans-sinapoyl)-beta-D-glucose + UDP. It catalyses the reaction (E)-4-coumarate + UDP-alpha-D-glucose = 1-O-(trans-4-coumaroyl)-beta-D-glucose + UDP. The enzyme catalyses (E)-caffeate + UDP-alpha-D-glucose = 1-O-[(E)-caffeoyl]-beta-D-glucose + UDP. The catalysed reaction is (E)-ferulate + UDP-alpha-D-glucose = 1-O-[(E)-feruloyl]-beta-D-glucose + UDP. It carries out the reaction genistein + UDP-alpha-D-glucose = genistein 7-O-beta-D-glucoside + UDP + H(+). It catalyses the reaction apigenin + UDP-alpha-D-glucose = apigenin 7-O-beta-D-glucoside + UDP + H(+). The enzyme catalyses luteolin + UDP-alpha-D-glucose = luteolin 7-O-beta-D-glucoside + UDP + H(+). Its function is as follows. Glucosyltransferase that catalyzes the formation of 1-O-beta-D-glucose esters with hydroxybenzoic acids and cinnamic acid including its derivatives as preferred glucosyl acceptors. Has significant activity with gallic acid (3,4,5-trihydroxybenzoic acid), 3,4-dihydroxybenzoic acid, 4-hydroxybenzoic acid, cinnamic acid, sinapic acid, coumaric acid, caffeic acid and ferulic acid in vitro. Gallic acid is the predicted native substrate of the enzyme, which thus catalyzes the formation of 1-O-galloyl-beta-D-glucose, the first committed step of hydrolyzable tannins (HTs) biosynthesis, with punicalagin isomers being the major HTs of pomegranate. Catalyzes the formation of flavonoid glucosides with genistein, apigenin and luteolin in vitro. Has low activity with benzoic acid, 2-hydroxybenzoic acid, 3-hydroxybenzoic acid, 2,4-dihydroxybenzoic acid, naringenin and quercetin. No activity with catechol, resveratrol, chlorogenic acid, catechin and epicatechin (building blocks of proanthocyanidins) or cyanidin, delphinidin and pelargonidin (the three anthocyanidins). The polypeptide is Gallate 1-beta-glucosyltransferase 84A24 (Punica granatum (Pomegranate)).